A 218-amino-acid polypeptide reads, in one-letter code: Sec-independent protein translocase protein TatB (218 aa).

A helical membrane pass occupies residues 1–21; it reads MFDIGFSELLLVLVIGLVVLG. Disordered stretches follow at residues 126-145 and 174-218; these read AESA…DVDK and SSVD…GGDR. The span at 199–218 shows a compositional bias: basic and acidic residues; sequence HSTDSHGADQPRTHQPGGDR.

Belongs to the TatB family. As to quaternary structure, the Tat system comprises two distinct complexes: a TatABC complex, containing multiple copies of TatA, TatB and TatC subunits, and a separate TatA complex, containing only TatA subunits. Substrates initially bind to the TatABC complex, which probably triggers association of the separate TatA complex to form the active translocon.

The protein localises to the cell inner membrane. In terms of biological role, part of the twin-arginine translocation (Tat) system that transports large folded proteins containing a characteristic twin-arginine motif in their signal peptide across membranes. Together with TatC, TatB is part of a receptor directly interacting with Tat signal peptides. TatB may form an oligomeric binding site that transiently accommodates folded Tat precursor proteins before their translocation. The chain is Sec-independent protein translocase protein TatB from Yersinia enterocolitica serotype O:8 / biotype 1B (strain NCTC 13174 / 8081).